The primary structure comprises 213 residues: Thiopurine S-methyltransferase (213 aa).

S-adenosyl-L-methionine is bound by residues Trp-10, Leu-45, Glu-66, and Arg-121.

This sequence belongs to the class I-like SAM-binding methyltransferase superfamily. TPMT family.

The protein resides in the cytoplasm. The catalysed reaction is S-adenosyl-L-methionine + a thiopurine = S-adenosyl-L-homocysteine + a thiopurine S-methylether.. The protein is Thiopurine S-methyltransferase of Aliivibrio fischeri (strain MJ11) (Vibrio fischeri).